The chain runs to 476 residues: MAKLARASALQFGANVTQTFVGAIITIYVINELGVGAFGIFALSAALVKWASIPAVGIRGAVITRMNESDDISPSEYFTTASVLTGAIILVGLLALLGYSPFVEQYLDYSGTQLVGGMFVSNVSFRLVLGGLRGENRVEMSSLYEALWGILSSLVKLALVYTGVGVDALFYGEITSSIVIGIFGVYSLNISFVSPTRSAAISLYSWARYGWLDNLKRMSYSWLDTIILGFFVSTSLVGIYEVAWRISALFVLLPTAISKSTFPTISSLRDTDKLNKVRRILTRGLSVAGVLAIPGLVGSVLVGGDILALYGPSVSSVGVAVSVLVSLSVVRLVECYETLVMQALNALDLPDRTFRIGVIFITTNIILNVSLIPMFGVIGAAIATLLSMTLGSILAVRALPKAVQTLPPVSAIGSQFVSAGAMAVVLFTILNYRPIGQPIEVVLYVLAGATTYGFVLLSLSSNFRERVQQLLSESLG.

Transmembrane regions (helical) follow at residues 7–29 (ASAL…TIYV), 34–56 (GVGA…IPAV), 83–103 (VLTG…SPFV), 112–132 (TQLV…LGGL), 146–166 (ALWG…GVGV), 168–188 (ALFY…VYSL), 222–242 (WLDT…IYEV), 246–266 (ISAL…PTIS), 287–307 (VAGV…GDIL), 310–330 (YGPS…LSVV), 354–373 (FRIG…SLIP), 377–396 (VIGA…ILAV), 409–429 (VSAI…LFTI), and 439–459 (IEVV…LLSL).

The protein belongs to the AglR/Agl15 family.

It localises to the cell membrane. Its pathway is cell surface structure biogenesis; S-layer biogenesis. Its function is as follows. Involved in the assembly of a N-linked pentasaccharide that decorates the S-layer glycoprotein and flagellins. Probably mediates or contributes to the translocation of the dolichol-phosphate-mannose across the membrane. The chain is Probable flippase AglR (aglR) from Haloferax volcanii (strain ATCC 29605 / DSM 3757 / JCM 8879 / NBRC 14742 / NCIMB 2012 / VKM B-1768 / DS2) (Halobacterium volcanii).